Here is a 427-residue protein sequence, read N- to C-terminus: Inward rectifier potassium channel 2 (427 aa).

The Cytoplasmic segment spans residues 1–81 (MGSVRTNRYS…IFTTCVDIRW (81 aa)). Position 76 is an S-nitrosocysteine (Cys76). The chain crosses the membrane as a helical span at residues 82-106 (RWMLVIFCLAFVLSWLFFGCVFWLI). Residues 107-128 (ALLHGDLDASKEGKACVSEVNS) lie on the Extracellular side of the membrane. An intramembrane region (helical; Pore-forming) is located at residues 129–140 (FTAAFLFSIETQ). Positions 141 to 147 (TTIGYGF) form an intramembrane region, pore-forming. Positions 142 to 147 (TIGYGF) match the Selectivity filter motif. Residues 148–156 (RCVTDECPI) are Extracellular-facing. The helical transmembrane segment at 157–178 (AVFMVVFQSIVGCIIDAFIIGA) threads the bilayer. Residues 179–427 (VMAKMAKPKK…PRPLRRESEI (249 aa)) lie on the Cytoplasmic side of the membrane. The tract at residues 181 to 208 (AKMAKPKKRNETLVFSHNAVIAMRDGKL) is polyphosphoinositide (PIP2)-binding. Residues 384-427 (SKEEDDSENGVPESTSTDTPPDIDLHNQASVPLEPRPLRRESEI) are disordered. The PDZ-binding motif lies at 425–427 (SEI).

Belongs to the inward rectifier-type potassium channel (TC 1.A.2.1) family. KCNJ2 subfamily. Homotetramer. Homomultimeric and heteromultimeric association with KCNJ4/Kir2.3. Can form heteromeric channels with Kir2.6/KCNJ18. Associates, via its PDZ-recognition domain, with a complex containing LIN7A, LIN7B, LIN7C, DLG1, CASK and APBA1. Post-translationally, S-nitrosylation increases the open probability and inward rectifying currents.

It is found in the cell membrane. Its subcellular location is the sarcolemma. It localises to the T-tubule. The catalysed reaction is K(+)(in) = K(+)(out). Activated by phosphatidylinositol 4,5 biphosphate (PtdIns(4,5)P2). Functionally, inward rectifier potassium channels are characterized by a greater tendency to allow potassium to flow into the cell rather than out of it. Their voltage dependence is regulated by the concentration of extracellular potassium; as external potassium is raised, the voltage range of the channel opening shifts to more positive voltages. The inward rectification is mainly due to the blockage of outward current by internal magnesium. Can be blocked by extracellular barium or cesium. Probably participates in establishing action potential waveform and excitability of neuronal and muscle tissues. The protein is Inward rectifier potassium channel 2 (KCNJ2) of Macaca mulatta (Rhesus macaque).